Here is a 393-residue protein sequence, read N- to C-terminus: Nuclear hormone receptor family member nhr-90 (393 aa).

The nuclear receptor DNA-binding region spans 6–79 (LQTCKICGAE…AGMKIEYFQH (74 aa)). The NR C4-type zinc finger occupies 9–30 (CKICGAENTRGNHFGVQCCRAC). The NR C4-type; degenerate zinc-finger motif lies at 47–62 (CLSVHCGEAARFCKPC). The 268-residue stretch at 121-388 (DLNSLVGKAS…FSHPEMFIDT (268 aa)) folds into the NR LBD domain.

Belongs to the nuclear hormone receptor family.

The protein resides in the nucleus. Its function is as follows. Orphan nuclear receptor. The sequence is that of Nuclear hormone receptor family member nhr-90 (nhr-90) from Caenorhabditis elegans.